The sequence spans 31 residues: AILEADDDVELLEGYLKDWEAFVSSAAAFEK.

The protein localises to the plastid. It is found in the chloroplast thylakoid. The protein is Unknown protein from spot 104 of 2D-PAGE of thylakoid of Pisum sativum (Garden pea).